The primary structure comprises 263 residues: Cytochrome c oxidase subunit 3 (263 aa).

A run of 7 helical transmembrane segments spans residues 9–29 (PFHMVDYSPWPLTGAIGAMIL), 40–60 (FNMNLLMIGMTVIVLTMIQWW), 84–104 (GMILFIASEVLFFASFFWAFF), 129–149 (IQIPLLNTAILLASGVTITWA), 161–181 (ALQGLFFTVMLGFYFTLLQMY), 198–218 (TFFVATGFHGLHVIIGTTFLL), and 241–261 (AWYWHFVDVVWLFLYLSIYWW).

It belongs to the cytochrome c oxidase subunit 3 family. As to quaternary structure, component of the cytochrome c oxidase (complex IV, CIV), a multisubunit enzyme composed of a catalytic core of 3 subunits and several supernumerary subunits. The complex exists as a monomer or a dimer and forms supercomplexes (SCs) in the inner mitochondrial membrane with ubiquinol-cytochrome c oxidoreductase (cytochrome b-c1 complex, complex III, CIII).

The protein localises to the mitochondrion inner membrane. The enzyme catalyses 4 Fe(II)-[cytochrome c] + O2 + 8 H(+)(in) = 4 Fe(III)-[cytochrome c] + 2 H2O + 4 H(+)(out). Functionally, component of the cytochrome c oxidase, the last enzyme in the mitochondrial electron transport chain which drives oxidative phosphorylation. The respiratory chain contains 3 multisubunit complexes succinate dehydrogenase (complex II, CII), ubiquinol-cytochrome c oxidoreductase (cytochrome b-c1 complex, complex III, CIII) and cytochrome c oxidase (complex IV, CIV), that cooperate to transfer electrons derived from NADH and succinate to molecular oxygen, creating an electrochemical gradient over the inner membrane that drives transmembrane transport and the ATP synthase. Cytochrome c oxidase is the component of the respiratory chain that catalyzes the reduction of oxygen to water. Electrons originating from reduced cytochrome c in the intermembrane space (IMS) are transferred via the dinuclear copper A center (CU(A)) of subunit 2 and heme A of subunit 1 to the active site in subunit 1, a binuclear center (BNC) formed by heme A3 and copper B (CU(B)). The BNC reduces molecular oxygen to 2 water molecules using 4 electrons from cytochrome c in the IMS and 4 protons from the mitochondrial matrix. The protein is Cytochrome c oxidase subunit 3 (COIII) of Locusta migratoria (Migratory locust).